The following is a 379-amino-acid chain: 3-dehydroquinate synthase (379 aa).

NAD(+) contacts are provided by residues 67–72, 101–105, 125–126, Lys-138, and Lys-147; these read PGEKNK, GIILD, and TT. Zn(2+)-binding residues include Glu-180, His-242, and His-258.

This sequence belongs to the sugar phosphate cyclases superfamily. Dehydroquinate synthase family. NAD(+) is required as a cofactor. It depends on Co(2+) as a cofactor. Zn(2+) serves as cofactor.

It localises to the cytoplasm. The catalysed reaction is 7-phospho-2-dehydro-3-deoxy-D-arabino-heptonate = 3-dehydroquinate + phosphate. It participates in metabolic intermediate biosynthesis; chorismate biosynthesis; chorismate from D-erythrose 4-phosphate and phosphoenolpyruvate: step 2/7. Functionally, catalyzes the conversion of 3-deoxy-D-arabino-heptulosonate 7-phosphate (DAHP) to dehydroquinate (DHQ). The sequence is that of 3-dehydroquinate synthase from Chlamydia caviae (strain ATCC VR-813 / DSM 19441 / 03DC25 / GPIC) (Chlamydophila caviae).